Here is a 251-residue protein sequence, read N- to C-terminus: 1-(5-phosphoribosyl)-5-[(5-phosphoribosylamino)methylideneamino] imidazole-4-carboxamide isomerase (251 aa).

The active-site Proton acceptor is the Asp-8. The active-site Proton donor is the Asp-131.

The protein belongs to the HisA/HisF family.

It localises to the cytoplasm. It carries out the reaction 1-(5-phospho-beta-D-ribosyl)-5-[(5-phospho-beta-D-ribosylamino)methylideneamino]imidazole-4-carboxamide = 5-[(5-phospho-1-deoxy-D-ribulos-1-ylimino)methylamino]-1-(5-phospho-beta-D-ribosyl)imidazole-4-carboxamide. It functions in the pathway amino-acid biosynthesis; L-histidine biosynthesis; L-histidine from 5-phospho-alpha-D-ribose 1-diphosphate: step 4/9. This chain is 1-(5-phosphoribosyl)-5-[(5-phosphoribosylamino)methylideneamino] imidazole-4-carboxamide isomerase, found in Burkholderia thailandensis (strain ATCC 700388 / DSM 13276 / CCUG 48851 / CIP 106301 / E264).